Here is a 321-residue protein sequence, read N- to C-terminus: MGTNGVRVFVILYLLAVCGCIEYDVDDNVHICTHTNVSHINHTSWYYNDKVIALATEDKTSGYISSFIKRVNISLTCLNISSLRYEDSGTYKGVSHLKDGVIVTTTMNISVKANIVDLTGRVRYLTRNYCEVKIRCEITSFALNGSTTPPHMILGTVDKWKYLPFPTDDYRYVGELKRYISGNPYPTESLALEISSTFNRFTIVKNLNDDEFSCYLFSQNYSFHKMLNVRNICESKWKALNNNDNASSMPASHNNLANDLSSMMSQLQNDNDDNNDYSAPMNVDNLIMIVLITMLSIILVIIVVIAAISIYKRSKYRHIDN.

A signal peptide spans 1–20 (MGTNGVRVFVILYLLAVCGC). N-linked (GlcNAc...) asparagine; by host glycosylation is found at Asn-36, Asn-41, Asn-72, Asn-79, Asn-108, Asn-144, Asn-220, and Asn-245. The helical transmembrane segment at 286-306 (LIMIVLITMLSIILVIIVVIA) threads the bilayer.

The protein belongs to the orthopoxvirus OPG049 family.

It is found in the host cell membrane. Its function is as follows. Plays a role in the spread of virus to neighboring cells ex vivo. This Homo sapiens (Human) protein is Protein OPG049 (OPG049).